The sequence spans 340 residues: Glycerol-3-phosphate dehydrogenase [NAD(P)+] (340 aa).

S11, W12, R33, and K106 together coordinate NADPH. Sn-glycerol 3-phosphate-binding residues include K106, G137, and S139. A141 contributes to the NADPH binding site. Positions 192, 245, 255, 256, and 257 each coordinate sn-glycerol 3-phosphate. K192 serves as the catalytic Proton acceptor. An NADPH-binding site is contributed by R256. The NADPH site is built by V280 and E282.

Belongs to the NAD-dependent glycerol-3-phosphate dehydrogenase family.

The protein localises to the cytoplasm. It catalyses the reaction sn-glycerol 3-phosphate + NAD(+) = dihydroxyacetone phosphate + NADH + H(+). The catalysed reaction is sn-glycerol 3-phosphate + NADP(+) = dihydroxyacetone phosphate + NADPH + H(+). It functions in the pathway membrane lipid metabolism; glycerophospholipid metabolism. Catalyzes the reduction of the glycolytic intermediate dihydroxyacetone phosphate (DHAP) to sn-glycerol 3-phosphate (G3P), the key precursor for phospholipid synthesis. The sequence is that of Glycerol-3-phosphate dehydrogenase [NAD(P)+] from Bacillus cereus (strain B4264).